The following is a 760-amino-acid chain: Catecholate siderophore receptor Fiu (760 aa).

The signal sequence occupies residues 1–31 (MENNRNFPARQFHSLTFFAGLCIGITPVAQA). The region spanning 67-175 (PVADTTRTMT…PTGSINMISK (109 aa)) is the TBDR plug domain. A TBDR beta-barrel domain is found at 180–760 (DSGIDASASI…TFLLTANMHF (581 aa)). The TonB C-terminal box signature appears at 743–760 (RYHPGEPRTFLLTANMHF).

The protein belongs to the TonB-dependent receptor family.

The protein resides in the cell outer membrane. In terms of biological role, involved in the active transport across the outer membrane of iron complexed with catecholate siderophores such as dihydroxybenzoylserine and dihydroxybenzoate. It derives its energy for transport by interacting with the trans-periplasmic membrane protein TonB. Can also transport catechol-substituted cephalosporins. Receptor for microcins M, H47 and E492. This is Catecholate siderophore receptor Fiu (fiu) from Escherichia coli (strain K12).